Reading from the N-terminus, the 300-residue chain is UDP-N-acetylenolpyruvoylglucosamine reductase (300 aa).

The 165-residue stretch at 30 to 194 (RVGGPADFFV…IGATFVLDSD (165 aa)) folds into the FAD-binding PCMH-type domain. Arg-174 is a catalytic residue. Ser-223 (proton donor) is an active-site residue. Glu-293 is a catalytic residue.

Belongs to the MurB family. The cofactor is FAD.

It is found in the cytoplasm. It catalyses the reaction UDP-N-acetyl-alpha-D-muramate + NADP(+) = UDP-N-acetyl-3-O-(1-carboxyvinyl)-alpha-D-glucosamine + NADPH + H(+). It participates in cell wall biogenesis; peptidoglycan biosynthesis. In terms of biological role, cell wall formation. In Geobacter sulfurreducens (strain ATCC 51573 / DSM 12127 / PCA), this protein is UDP-N-acetylenolpyruvoylglucosamine reductase.